The chain runs to 337 residues: B3 domain-containing protein REM16 (337 aa).

2 DNA-binding regions (TF-B3) span residues 22–116 (TLHF…FDGQ) and 223–321 (FLVF…FRGE).

It localises to the nucleus. The protein is B3 domain-containing protein REM16 (REM16) of Arabidopsis thaliana (Mouse-ear cress).